The chain runs to 328 residues: tRNA methyltransferase 10 homolog A (328 aa).

Disordered stretches follow at residues 1-91 (MSSE…RKRV) and 281-328 (HKAC…PVLQ). Serine 22 carries the post-translational modification Phosphoserine. A coiled-coil region spans residues 43–83 (RQLKKLMKQKQWEEQREQRKEKRKEKRKRKKLERRQLESNS). A compositionally biased stretch (basic and acidic residues) spans 52–62 (KQWEEQREQRK). The span at 63 to 75 (EKRKEKRKRKKLE) shows a compositional bias: basic residues. Residues 88 to 278 (RKRVRRDVAR…TILPQRKGAV (191 aa)) enclose the SAM-dependent MTase TRM10-type domain. Positions 305 to 319 (ESCRDNPDSPQKDEQ) are enriched in basic and acidic residues.

Belongs to the class IV-like SAM-binding methyltransferase superfamily. TRM10 family. Interacts with tRNA.

The protein localises to the nucleus. It localises to the nucleolus. It carries out the reaction guanosine(9) in tRNA + S-adenosyl-L-methionine = N(1)-methylguanosine(9) in tRNA + S-adenosyl-L-homocysteine + H(+). In terms of biological role, S-adenosyl-L-methionine-dependent guanine N(1)-methyltransferase that catalyzes the formation of N(1)-methylguanine at position 9 (m1G9) in tRNAs. Probably not able to catalyze formation of N(1)-methyladenine at position 9 (m1A9) in tRNAs. This chain is tRNA methyltransferase 10 homolog A (Trmt10a), found in Mus musculus (Mouse).